We begin with the raw amino-acid sequence, 243 residues long: Myelin protein P0 (243 aa).

The first 26 residues, 1-26, serve as a signal peptide directing secretion; that stretch reads MESSGLRAPCSLLVLLSALVLPPTLA. Residues 27-141 enclose the Ig-like V-type domain; that stretch reads IEVYTDREVY…VGKSSYVHLQ (115 aa). Residues 27–154 lie on the Extracellular side of the membrane; it reads IEVYTDREVY…KGAARAGLVL (128 aa). A disulfide bond links C47 and C123. N118 carries N-linked (GlcNAc...) asparagine glycosylation. The helical transmembrane segment at 155-175 threads the bilayer; it reads GIIIAVALALVIVVTILILLI. Over 176-243 the chain is Cytoplasmic; that stretch reads RYCWLRRQVR…GIGDSRKDRK (68 aa). Positions 201–243 are disordered; sequence AKDSSKRSSRQTPILYAMLDQTRGKASEKKGKGGIGDSRKDRK. Basic and acidic residues predominate over residues 222 to 243; it reads TRGKASEKKGKGGIGDSRKDRK.

This sequence belongs to the myelin P0 protein family.

Its subcellular location is the cell membrane. Creation of an extracellular membrane face which guides the wrapping process and ultimately compacts adjacent lamellae. The sequence is that of Myelin protein P0 (mpz) from Xenopus tropicalis (Western clawed frog).